Here is a 416-residue protein sequence, read N- to C-terminus: Putative competence-damage inducible protein (416 aa).

Belongs to the CinA family.

This is Putative competence-damage inducible protein from Levilactobacillus brevis (strain ATCC 367 / BCRC 12310 / CIP 105137 / JCM 1170 / LMG 11437 / NCIMB 947 / NCTC 947) (Lactobacillus brevis).